The chain runs to 725 residues: Homeobox-leucine zipper protein HDG3 (725 aa).

The interval 1–74 is disordered; the sequence is MSQSNMVPVA…PRHKKKKYNR (74 aa). Low complexity predominate over residues 11 to 40; sequence NNGDNNNDNENNNNNNNNGGTDNTNAGNDS. The segment covering 46 to 64 has biased composition (polar residues); the sequence is DSGNTSSGNHGEGLGNNQA. Basic residues predominate over residues 65-74; the sequence is PRHKKKKYNR. Residues 68-127 constitute a DNA-binding region (homeobox); sequence KKKKYNRHTQLQISEMEAFFRECPHPDDKQRYDLSAQLGLDPVQIKFWFQNKRTQNKNQQ. The stretch at 117 to 201 forms a coiled coil; it reads QNKRTQNKNQ…SVTAEKISRL (85 aa). The region spanning 243-475 is the START domain; the sequence is DANTKPIIME…LVRQCERISS (233 aa).

This sequence belongs to the HD-ZIP homeobox family. Class IV subfamily. As to quaternary structure, interacts with AIL7/PLT7, ANT, BBM and AIL1. Expressed in siliques.

Its subcellular location is the nucleus. In terms of biological role, probable transcription factor. Seems to promote cell differentiation. In Arabidopsis thaliana (Mouse-ear cress), this protein is Homeobox-leucine zipper protein HDG3.